Here is a 182-residue protein sequence, read N- to C-terminus: Transcription termination/antitermination protein NusG (182 aa).

The region spanning Gly131–Ser161 is the KOW domain.

Belongs to the NusG family.

Functionally, participates in transcription elongation, termination and antitermination. This Vibrio parahaemolyticus serotype O3:K6 (strain RIMD 2210633) protein is Transcription termination/antitermination protein NusG.